The chain runs to 83 residues: Cytochrome b559 subunit alpha (83 aa).

Residues valine 21–tryptophan 35 traverse the membrane as a helical segment. Heme is bound at residue histidine 23.

It belongs to the PsbE/PsbF family. As to quaternary structure, heterodimer of an alpha subunit and a beta subunit. PSII is composed of 1 copy each of membrane proteins PsbA, PsbB, PsbC, PsbD, PsbE, PsbF, PsbH, PsbI, PsbJ, PsbK, PsbL, PsbM, PsbT, PsbX, PsbY, PsbZ, Psb30/Ycf12, at least 3 peripheral proteins of the oxygen-evolving complex and a large number of cofactors. It forms dimeric complexes. Requires heme b as cofactor.

Its subcellular location is the plastid. It is found in the chloroplast thylakoid membrane. This b-type cytochrome is tightly associated with the reaction center of photosystem II (PSII). PSII is a light-driven water:plastoquinone oxidoreductase that uses light energy to abstract electrons from H(2)O, generating O(2) and a proton gradient subsequently used for ATP formation. It consists of a core antenna complex that captures photons, and an electron transfer chain that converts photonic excitation into a charge separation. This Chara vulgaris (Common stonewort) protein is Cytochrome b559 subunit alpha.